Here is a 205-residue protein sequence, read N- to C-terminus: Translation initiation factor 2 subunit beta (205 aa).

The 59-residue stretch at 145 to 203 (GIEIGKEYTVTIESTGSAGEGIARYQGYTIYVPKAKKGERVKIIIRKIKRNVAIAELAD) folds into the TRAM domain.

The protein belongs to the eIF-2-beta/eIF-5 family. In terms of assembly, heterotrimer composed of an alpha, a beta and a gamma chain.

Functionally, eIF-2 functions in the early steps of protein synthesis by forming a ternary complex with GTP and initiator tRNA. This chain is Translation initiation factor 2 subunit beta, found in Picrophilus torridus (strain ATCC 700027 / DSM 9790 / JCM 10055 / NBRC 100828 / KAW 2/3).